A 594-amino-acid polypeptide reads, in one-letter code: Choline dehydrogenase, mitochondrial (594 aa).

The N-terminal 29 residues, 1 to 29 (MWCLLRGLGRPGALARGALGQQQSLGARA), are a transit peptide targeting the mitochondrion. 42-71 (SYVVVGAGSAGCVLAGRLTEDPAERVLLLE) provides a ligand contact to FAD. Position 436 is an N6-succinyllysine (K436). An N6-acetyllysine; alternate mark is found at K484 and K496. Residues K484 and K496 each carry the N6-succinyllysine; alternate modification. Catalysis depends on H511, which acts as the Proton acceptor. K580 is modified (N6-acetyllysine).

This sequence belongs to the GMC oxidoreductase family. FAD is required as a cofactor.

The protein resides in the mitochondrion inner membrane. It carries out the reaction choline + A = betaine aldehyde + AH2. It participates in amine and polyamine biosynthesis; betaine biosynthesis via choline pathway; betaine aldehyde from choline (cytochrome c reductase route): step 1/1. The chain is Choline dehydrogenase, mitochondrial (CHDH) from Homo sapiens (Human).